We begin with the raw amino-acid sequence, 168 residues long: Photosystem I assembly protein Ycf3 (168 aa).

TPR repeat units lie at residues 35–68 (AFTYYRDRMSAQSEGNYAEALQNYYEAMRLEIDP), 72–105 (SYILYNIGLIHTSNGEHMKALEYYFRALERNPFL), and 120–153 (GEQAIQQGDSEIAGAWFDQAAEYWKQALALTPGN).

This sequence belongs to the Ycf3 family.

The protein resides in the plastid membrane. Functionally, essential for the assembly of the photosystem I (PSI) complex. May act as a chaperone-like factor to guide the assembly of the PSI subunits. This chain is Photosystem I assembly protein Ycf3, found in Cuscuta reflexa (Southern Asian dodder).